A 3423-amino-acid polypeptide reads, in one-letter code: Genome polyprotein (3423 aa).

The disordered stretch occupies residues 1–25; it reads MKNPKKKSGGFRIVNMLKRGVARVS. The Cytoplasmic portion of the chain corresponds to 1–104; sequence MKNPKKKSGG…INARKEKKRR (104 aa). A hydrophobic; homodimerization of capsid protein C region spans residues 37 to 72; the sequence is LLLGHGPIRMVLAILAFLRFTAIKPSLGLINRWGSV. Residues 105 to 122 constitute a propeptide, ER anchor for capsid protein C, removed in mature form by serine protease NS3; it reads GTDTSVGIVGLLLTTAMA. The chain crosses the membrane as a helical span at residues 105–125; sequence GTDTSVGIVGLLLTTAMAVEV. Over 126-249 the chain is Extracellular; the sequence is TRRGNAYYMY…YTKHLIRVEN (124 aa). Asn-192 carries an N-linked (GlcNAc...) asparagine; by host glycan. The chain crosses the membrane as a helical span at residues 250–269; that stretch reads WIFRNPGFALAAAAIAWLLG. Over 270–274 the chain is Cytoplasmic; the sequence is SSTSQ. A helical transmembrane segment spans residues 275–290; it reads KVIYLVMILLIAPAYS. The Extracellular segment spans residues 291–745; the sequence is IRCIGVSNRD…HQIFGAAFKS (455 aa). A Glycyl lysine isopeptide (Lys-Gly) (interchain with G-Cter in ubiquitin) cross-link involves residue Lys-328. Disulfide bonds link Cys-350/Cys-406 and Cys-382/Cys-411. Residues 388-401 form a fusion peptide region; sequence DRGWGNGCGLFGKG. Asn-444 carries N-linked (GlcNAc...) asparagine; by host glycosylation. Disulfide bonds link Cys-480-Cys-581 and Cys-598-Cys-629. Lys-571 is covalently cross-linked (Glycyl lysine isopeptide (Lys-Gly) (interchain with G-Cter in ubiquitin)). A helical membrane pass occupies residues 746 to 767; the sequence is LFGGMSWFSQILIGTLLVWLGL. The Cytoplasmic segment spans residues 768-773; that stretch reads NTKNGS. Residues 774–794 traverse the membrane as a helical segment; that stretch reads ISLMCLALGGVLIFLSTAVSA. Residues 795–1177 are Lumenal-facing; it reads DVGCSVDFSK…EGLKKRMTTK (383 aa). Cystine bridges form between Cys-798–Cys-809, Cys-849–Cys-937, Cys-973–Cys-1017, Cys-1074–Cys-1123, Cys-1085–Cys-1106, and Cys-1107–Cys-1110. N-linked (GlcNAc...) asparagine; by host glycosylation is found at Asn-924 and Asn-1001. Residues 1178-1198 traverse the membrane as a helical segment; the sequence is IIISTSMAVLVAMILGGFSMS. Topologically, residues 1199 to 1220 are cytoplasmic; it reads DLAKLAILMGATFAEMNTGGDV. Residues 1221-1241 form a helical membrane-spanning segment; sequence AHLALIAAFKVRPALLVSFIF. The Lumenal segment spans residues 1242 to 1270; that stretch reads RANWTPRESMLLALASCLLQTAISALEGD. Residues 1271-1291 traverse the membrane as a helical segment; the sequence is LMVPINGFALAWLAIRAMVVP. Residues 1292-1295 lie on the Cytoplasmic side of the membrane; that stretch reads RTDN. Residues 1296–1316 traverse the membrane as a helical segment; sequence ITLAILAALTPLARGTLLVAW. At 1317 to 1345 the chain is on the lumenal side; sequence RAGLATCGGFMLLSLKGKGSVKKNLPFVM. A helical membrane pass occupies residues 1346–1366; that stretch reads ALGLTAVRLVDPINVVGLLLL. At 1367-1373 the chain is on the cytoplasmic side; that stretch reads TRSGKRS. Residues 1374–1394 form a helical membrane-spanning segment; sequence WPPSEVLTAVGLICALAGGFA. The Lumenal segment spans residues 1395–1397; sequence KAD. A helical membrane pass occupies residues 1398–1418; that stretch reads IEMAGPMAAVGLLIVSYVVSG. Over 1419–1472 the chain is Cytoplasmic; that stretch reads KSVDMYIERAGDITWEKDAEVTGNSPRLDVALDESGDFSLVEDDGPPMREIILK. The segment at 1425 to 1464 is interacts with and activates NS3 protease; sequence IERAGDITWEKDAEVTGNSPRLDVALDESGDFSLVEDDGP. A disordered region spans residues 1429–1451; the sequence is GDITWEKDAEVTGNSPRLDVALD. The segment at residues 1473 to 1493 is an intramembrane region (helical); that stretch reads VVLMAICGMNPIAIPFAAGAW. Residues 1494–2170 lie on the Lumenal side of the membrane; sequence YVYVKTGKRS…KAAAAQLPET (677 aa). The 178-residue stretch at 1503–1680 folds into the Peptidase S7 domain; it reads SGALWDVPAP…RREEETPVEC (178 aa). Active-site charge relay system; for serine protease NS3 activity residues include His-1553, Asp-1577, and Ser-1637. Residues 1683 to 1839 form the Helicase ATP-binding domain; the sequence is PSMLKKKQLT…DSNSPIMDTE (157 aa). An important for RNA-binding region spans residues 1687-1690; that stretch reads KKKQ. 1696 to 1703 is an ATP binding site; it reads LHPGAGKT. Positions 1787 to 1790 match the DEAH box motif; that stretch reads DEAH. A Helicase C-terminal domain is found at 1834-2013; that stretch reads PIMDTEVEVP…GLIASLYRPE (180 aa). N6-acetyllysine; by host is present on Lys-1891. A helical membrane pass occupies residues 2171–2191; sequence LETIMLLGLLGTVSLGIFFVL. Residues 2192–2195 lie on the Lumenal side of the membrane; it reads MRNK. An intramembrane region (helical) is located at residues 2196-2216; the sequence is GIGKMGFGMVTLGASAWLMWL. The Cytoplasmic segment spans residues 2217 to 2218; that stretch reads SE. The helical transmembrane segment at 2219 to 2239 threads the bilayer; it reads IEPARIACVLIVVFLLLVVLI. Topologically, residues 2240-2254 are lumenal; sequence PEPEKQRSPQDNQMA. The helical intramembrane region spans 2255–2269; that stretch reads IIIMVAVGLLGLITA. Residues 2270-2307 are Lumenal-facing; that stretch reads NELGWLERTKSDLSHLMGRREEGATIGFSMDIDLRPAS. An intramembrane region (helical) is located at residues 2308 to 2328; sequence AWAIYAALTTFITPAVQHAVT. At 2329 to 2344 the chain is on the lumenal side; sequence TSYNNYSLMAMATQAG. Residues 2345-2365 traverse the membrane as a helical segment; the sequence is VLFGMGKGMPFYAWDFGVPLL. Residues 2366–2375 are Cytoplasmic-facing; the sequence is MIGCYSQLTP. The helical transmembrane segment at 2376–2396 threads the bilayer; sequence LTLIVAIILLVAHYMYLIPGL. At 2397–2441 the chain is on the lumenal side; that stretch reads QAAAARAAQKRTAAGIMKNPVVDGIVVTDIDTMTIDPQVEKKMGQ. A helical membrane pass occupies residues 2442-2462; sequence VLLIAVAVSSAILSRTAWGWG. Over 2463-3423 the chain is Cytoplasmic; sequence EAGALITAAT…GEEGSTPGVL (961 aa). The mRNA cap 0-1 NS5-type MT domain occupies 2521–2785; that stretch reads GGGTGETLGE…DVNLGSGTRA (265 aa). 2533–2539 lines the GTP pocket; sequence KARLNQM. Ser-2576 contributes to the S-adenosyl-L-methionine binding site. The residue at position 2576 (Ser-2576) is a Phosphoserine. Residue Lys-2581 is the For 2'-O-MTase activity of the active site. Residues 2597–2600 form an SUMO-interacting motif (SIM) region; the sequence is VIDL. Residues Gly-2606, Trp-2607, Thr-2624, Lys-2625, His-2630, Glu-2631, Asp-2651, Val-2652, Asp-2666, and Ile-2667 each contribute to the S-adenosyl-L-methionine site. Asp-2666 serves as the catalytic For 2'-O-MTase activity. A GTP-binding site is contributed by 2669–2675; sequence ESSSSPE. Lys-2702 (for 2'-O-MTase activity) is an active-site residue. 2733–2735 is a GTP binding site; that stretch reads RNS. Glu-2738 serves as the catalytic For 2'-O-MTase activity. Tyr-2740 is a binding site for S-adenosyl-L-methionine. Residues 2908–2914 carry the Nuclear localization signal (NLS) motif; that stretch reads KHKRPRV. Residues Glu-2959, His-2963, Cys-2968, and Cys-2971 each coordinate Zn(2+). The 151-residue stretch at 3049–3199 folds into the RdRp catalytic domain; that stretch reads GRMYADDTAG…KPIDDRFAHA (151 aa). Positions 3234, 3250, and 3369 each coordinate Zn(2+).

The protein in the N-terminal section; belongs to the class I-like SAM-binding methyltransferase superfamily. mRNA cap 0-1 NS5-type methyltransferase family. In terms of assembly, homodimer. Interacts with host SERTAD3; this interaction promotes capsid protein C degradation. Interacts with host CAPRIN1; this interaction is probably linked to the inhibition of stress granules formation by the virus. Interacts with host G3BP1; this interaction is probably linked to the inhibition of stress granules formation by the virus. Forms heterodimers with envelope protein E in the endoplasmic reticulum and Golgi. Interacts with non-structural protein 2A. As to quaternary structure, homodimer; in the endoplasmic reticulum and Golgi. Interacts with host TYRO3, AXL and DC-SIGN proteins. Interacts with non-structural protein 2A. Interacts with host HAVCR1; this interaction likely mediates virus attachment to host cell. Interacts with host NCAM1. Interacts with host HSPA5. Interacts with Aedes aegypti SRPN25, APY and venom allergen-1 salivary proteins; the interactions do not affect Zika virus replication in human endothelial cells and keratinocytes. In terms of assembly, homodimer; Homohexamer when secreted. Interacts with host TBK1. Interacts with host USP8. Interacts with envelope protein E. Interacts with the structural protein prM/E complex, and the NS2B/NS3 protease complex. As to quaternary structure, forms a heterodimer with serine protease NS3. May form homooligomers. Interacts with human SPCS1. Interacts with non-structural protein 2A. In terms of assembly, forms a heterodimer with NS2B. Interacts with NS4B. Interacts with unphosphorylated RNA-directed RNA polymerase NS5; this interaction stimulates RNA-directed RNA polymerase NS5 guanylyltransferase activity. Interacts with non-structural protein 2A. Interacts with host SHFL; this interaction promotes NS3 degradation via a lysosome-dependent pathway. Interacts with host CEP63; this interaction disorganizes the centrosome and inhibits host innate immune response. May interact with host ANKLE2; the interaction may cause defects in brain development, such as microcephaly. May interact with host SRPRA and SEC61G. As to quaternary structure, interacts with serine protease NS3. Interacts with NS1. In terms of assembly, homodimer. Interacts with host STAT2; this interaction inhibits the phosphorylation of the latter, and, when all viral proteins are present (polyprotein), targets STAT2 for degradation. Interacts with host TBK1 and IKBKE; these interactions lead to the inhibition of the host RIG-I signaling pathway. Interacts with host PAF1 complex; the interaction may prevent the recruitment of the host PAF1 complex to interferon-responsive genes, and thus reduces the immune response. Interacts with serine protease NS3. Interacts with host KPNA2. Interacts with host ZSWIM8; this interaction allows STAT2 binding to ZSWIM8 and subsequent proteasomal degradation leading to inhibition of interferon signaling. Specific enzymatic cleavages in vivo yield mature proteins. Cleavages in the lumen of endoplasmic reticulum are performed by host signal peptidase, whereas cleavages in the cytoplasmic side are performed by serine protease NS3. Signal cleavage at the 2K-4B site requires a prior NS3 protease-mediated cleavage at the 4A-2K site. In terms of processing, cleaved in post-Golgi vesicles by a host furin, releasing the mature small envelope protein M, and peptide pr. This cleavage is incomplete as up to 30% of viral particles still carry uncleaved prM. Post-translationally, N-glycosylation plays a role in virulence in mammalian and mosquito hosts, but may have no effect on neurovirulence. Ubiquitination by host TRIM7 promotes virus attachment and fusion of the virus and the host endosome membrane. In terms of processing, N-glycosylated. The excreted form is glycosylated, which is required for efficient secretion of the protein from infected cells. Post-translationally, ubiquitination by host TRIM22 leads to proteasomal degradation. Acetylated by host KAT5. Acetylation modulates NS3 RNA-binding and unwinding activities and plays an important positive role for viral replication. In terms of processing, phosphorylated on serines residues. This phosphorylation may trigger NS5 nuclear localization. Post-translationally, sumoylated, required for regulating IFN induced interferon stimulated genes/ISGs.

It localises to the virion. Its subcellular location is the host nucleus. The protein resides in the host cytoplasm. The protein localises to the host perinuclear region. It is found in the secreted. It localises to the virion membrane. Its subcellular location is the host endoplasmic reticulum membrane. The protein resides in the host cell surface. The catalysed reaction is a 5'-end (5'-triphosphoguanosine)-ribonucleoside in mRNA + S-adenosyl-L-methionine = a 5'-end (N(7)-methyl 5'-triphosphoguanosine)-ribonucleoside in mRNA + S-adenosyl-L-homocysteine. It catalyses the reaction a 5'-end (N(7)-methyl 5'-triphosphoguanosine)-ribonucleoside in mRNA + S-adenosyl-L-methionine = a 5'-end (N(7)-methyl 5'-triphosphoguanosine)-(2'-O-methyl-ribonucleoside) in mRNA + S-adenosyl-L-homocysteine + H(+). The enzyme catalyses RNA(n) + a ribonucleoside 5'-triphosphate = RNA(n+1) + diphosphate. It carries out the reaction Selective hydrolysis of -Xaa-Xaa-|-Yaa- bonds in which each of the Xaa can be either Arg or Lys and Yaa can be either Ser or Ala.. The catalysed reaction is a ribonucleoside 5'-triphosphate + H2O = a ribonucleoside 5'-diphosphate + phosphate + H(+). It catalyses the reaction ATP + H2O = ADP + phosphate + H(+). Plays a role in virus budding by binding to the cell membrane and gathering the viral RNA into a nucleocapsid that forms the core of the mature virus particle. During virus entry, may induce genome penetration into the host cytoplasm after hemifusion induced by the surface proteins. Can migrate to the cell nucleus where it modulates host functions. Inhibits the integrated stress response (ISR) in the infected cell. Its function is as follows. Inhibits RNA silencing by interfering with host Dicer. In terms of biological role, prevents premature fusion activity of envelope proteins in trans-Golgi by binding to envelope protein E at pH 6.0. After virion release in extracellular space, gets dissociated from E dimers. Functionally, plays a role in host immune defense modulation and protection of envelope protein E during virion synthesis. PrM-E cleavage is inefficient, many virions are only partially matured and immature prM-E proteins could play a role in immune evasion. Contributes to fetal microcephaly in humans. Acts as a chaperone for envelope protein E during intracellular virion assembly by masking and inactivating envelope protein E fusion peptide. prM is the only viral peptide matured by host furin in the trans-Golgi network probably to avoid catastrophic activation of the viral fusion activity in acidic Golgi compartment prior to virion release. May play a role in virus budding. Exerts cytotoxic effects by activating a mitochondrial apoptotic pathway through M ectodomain. May display a viroporin activity. Its function is as follows. Binds to host cell surface receptors and mediates fusion between viral and cellular membranes. Efficient virus attachment to cell is, at least in part, mediated by host HAVCR1 in a cell-type specific manner. In addition, host NCAM1 can also be used as entry receptor. Interaction with host HSPA5 plays an important role in the early stages of infection as well. Envelope protein is synthesized in the endoplasmic reticulum and forms a heterodimer with protein prM. The heterodimer plays a role in virion budding in the ER, and the newly formed immature particle is covered with 60 spikes composed of heterodimers between precursor prM and envelope protein E. The virion is transported to the Golgi apparatus where the low pH causes the dissociation of PrM-E heterodimers and formation of E homodimers. PrM-E cleavage is inefficient, many virions are only partially matured and immature prM-E proteins could play a role in immune evasion. In terms of biological role, plays a role in the inhibition of host RLR-induced interferon-beta activation by targeting TANK-binding kinase 1/TBK1. In addition, recruits the host deubiquitinase USP8 to cleave 'Lys-11'-linked polyubiquitin chains from caspase-1/CASP1 thus inhibiting its proteasomal degradation. In turn, stabilized CASP1 promotes cleavage of cGAS, which inhibits its ability to recognize mitochondrial DNA release and initiate type I interferon signaling. Functionally, component of the viral RNA replication complex that recruits genomic RNA, the structural protein prM/E complex, and the NS2B/NS3 protease complex to the virion assembly site and orchestrates virus morphogenesis. Also antagonizes the host alpha/beta interferon antiviral response. May disrupt adherens junction formation and thereby impair proliferation of radial cells in the host cortex. Required cofactor for the serine protease function of NS3. Its function is as follows. Displays three enzymatic activities: serine protease, NTPase and RNA helicase. NS3 serine protease, in association with NS2B, performs its autocleavage and cleaves the polyprotein at dibasic sites in the cytoplasm: C-prM, NS2A-NS2B, NS2B-NS3, NS3-NS4A, NS4A-2K and NS4B-NS5. NS3 RNA helicase binds RNA and unwinds dsRNA in the 3' to 5' direction. Leads to translation arrest when expressed ex vivo. Disrupts host centrosome organization in a CEP63-dependent manner to degrade host TBK1 and inhibits innate immune response. Inhibits the integrated stress response (ISR) in the infected cell. In terms of biological role, regulates the ATPase activity of the NS3 helicase activity. NS4A allows NS3 helicase to conserve energy during unwinding. Cooperatively with NS4B suppresses the Akt-mTOR pathway and leads to cellular dysregulation. By inhibiting host ANKLE2 functions, may cause defects in brain development, such as microcephaly. Also antagonizes the host MDA5-mediated induction of alpha/beta interferon antiviral response. Leads to translation arrest when expressed ex vivo. Inhibits the integrated stress response (ISR) in the infected cell. Functionally, functions as a signal peptide for NS4B and is required for the interferon antagonism activity of the latter. Induces the formation of ER-derived membrane vesicles where the viral replication takes place. Also plays a role in the inhibition of host RLR-induced interferon-beta production at TANK-binding kinase 1/TBK1 level. Cooperatively with NS4A suppresses the Akt-mTOR pathway and leads to cellular dysregulation. Its function is as follows. Replicates the viral (+) and (-) RNA genome, and performs the capping of genomes in the cytoplasm. Methylates viral RNA cap at guanine N-7 and ribose 2'-O positions. Once sufficient NS5 is expressed, binds to the cap-proximal structure and inhibits further translation of the viral genome. Besides its role in RNA genome replication, also prevents the establishment of a cellular antiviral state by blocking the interferon-alpha/beta (IFN-alpha/beta) signaling pathway. Mechanistically, interferes with host kinases TBK1 and IKKE upstream of interferon regulatory factor 3/IRF3 to inhibit the RIG-I pathway. Also antagonizes type I interferon signaling by targeting STAT2 for degradation by the proteasome thereby preventing activation of JAK-STAT signaling pathway. Mechanistically, acts as a scaffold protein to connect host ZSWIM8/CUL3 ligase complex and STAT2, leading to STAT2 degradation. Within the host nucleus, disrupts host SUMO1 and STAT2 co-localization with PML, resulting in PML degradation. May also reduce immune responses by preventing the recruitment of the host PAF1 complex to interferon-responsive genes. This is Genome polyprotein from Zika virus (isolate ZIKV/Human/Cambodia/FSS13025/2010) (ZIKV).